The sequence spans 435 residues: Methylenetetrahydrofolate--tRNA-(uracil-5-)-methyltransferase TrmFO (435 aa).

Residue 9 to 14 (GAGLAG) participates in FAD binding.

This sequence belongs to the MnmG family. TrmFO subfamily. Requires FAD as cofactor.

Its subcellular location is the cytoplasm. It catalyses the reaction uridine(54) in tRNA + (6R)-5,10-methylene-5,6,7,8-tetrahydrofolate + NADH + H(+) = 5-methyluridine(54) in tRNA + (6S)-5,6,7,8-tetrahydrofolate + NAD(+). The enzyme catalyses uridine(54) in tRNA + (6R)-5,10-methylene-5,6,7,8-tetrahydrofolate + NADPH + H(+) = 5-methyluridine(54) in tRNA + (6S)-5,6,7,8-tetrahydrofolate + NADP(+). Functionally, catalyzes the folate-dependent formation of 5-methyl-uridine at position 54 (M-5-U54) in all tRNAs. The sequence is that of Methylenetetrahydrofolate--tRNA-(uracil-5-)-methyltransferase TrmFO from Staphylococcus haemolyticus (strain JCSC1435).